A 157-amino-acid chain; its full sequence is Large ribosomal subunit protein bL17 (157 aa).

Residues 124–157 (AAPVVSKQDRAKRVKGSKKAESRSQENEGGDAAE) are disordered.

Belongs to the bacterial ribosomal protein bL17 family. Part of the 50S ribosomal subunit. Contacts protein L32.

This is Large ribosomal subunit protein bL17 from Chlorobaculum tepidum (strain ATCC 49652 / DSM 12025 / NBRC 103806 / TLS) (Chlorobium tepidum).